The primary structure comprises 350 residues: Protein RecA (350 aa).

Residue 65 to 72 (GPESSGKT) participates in ATP binding.

Belongs to the RecA family.

It is found in the cytoplasm. Its function is as follows. Can catalyze the hydrolysis of ATP in the presence of single-stranded DNA, the ATP-dependent uptake of single-stranded DNA by duplex DNA, and the ATP-dependent hybridization of homologous single-stranded DNAs. It interacts with LexA causing its activation and leading to its autocatalytic cleavage. The protein is Protein RecA of Nautilia profundicola (strain ATCC BAA-1463 / DSM 18972 / AmH).